Reading from the N-terminus, the 1083-residue chain is Centrosomal protein of 131 kDa (1083 aa).

2 disordered regions span residues 1 to 155 (MKGT…AGPR) and 220 to 258 (GSES…EVTE). The tract at residues 1-250 (MKGTRAIGSV…RNNTGGSTGL (250 aa)) is interaction with PLK4. 2 positions are modified to phosphoserine: serine 14 and serine 35. Serine 47 is modified (phosphoserine; by MAPKAPK2). The segment covering 68–87 (QAINNLRRSNSTTQVSQPRS) has biased composition (polar residues). Phosphoserine; by MAPKAPK2 and PLK4 is present on serine 78. A phosphoserine mark is found at serine 89, serine 105, serine 114, serine 146, and serine 150. Over residues 138–148 (LPSNARSSSAL) the composition is skewed to polar residues. A compositionally biased stretch (polar residues) spans 232–245 (NVSSATHSARNNTG). The 21-residue stretch at 269–289 (NQATVTIQRWYRHQVQRRGAG) folds into the IQ domain. The tract at residues 301-429 (REEQRQRSGE…PQQPPEDRTQ (129 aa)) is disordered. Basic and acidic residues-rich tracts occupy residues 317 to 333 (HQQK…EKAR) and 360 to 369 (GPPENPRETR). Position 381 is a phosphoserine (serine 381). Threonine 383 is modified (phosphothreonine). Serine 453, serine 489, aspartate 496, serine 499, serine 731, and serine 798 each carry phosphoserine. Residues 1047–1076 (KEEAVSSLRTQHEAAVKRADHLEELLEQHR) show a composition bias toward basic and acidic residues. Positions 1047 to 1083 (KEEAVSSLRTQHEAAVKRADHLEELLEQHRRPTPSTK) are disordered.

This sequence belongs to the CEP131 family. In terms of assembly, self-associates. Associates with the centriolar satellite BBSome protein complex. Interacts with BBS4; the interaction limits BBS4 availability for association with the BBSome complex, and hence negatively regulates ciliary localization of the BBSome complex. Interacts with MIB1. Interacts with PCM1; the interaction increases in response to ultraviolet light (UV) radiation. Associates with microtubules; association with microtubules is reduced in response to cellular stress, such as UV stimulation, in a process that requires p38 MAP kinase signaling. Interacts with CEP290, DCTN1, PCNT, PCM1 and CEP152. Interacts with 14-3-3 proteins following UV-induced phosphorylation by MAPKAPK2; this inhibits formation of novel centriolar satellites. Interacts with SDCCAG8. Interacts with CCDC61. Interacts with PLK4. Ubiquitinated. Undergoes monoubiquitination catalyzed by the E3 ubiquitin-protein ligase MIB1 in proliferating cells, preventing cilia formation. Monoubiquitination by MIB1 is inhibited in response to cellular stress, such as ultraviolet light (UV) radiation or heat shock, resulting in cilia formation initiation. In terms of processing, MAPKAPK2-dependent phosphorylation at Ser-47 and Ser-78 occurs in response to cellular stress such as exposure to ultraviolet irradiation and promotes binding to 14-3-3 proteins which leads to cytoplasmic sequestration of CEP131 and blocks formation of new centriolar satellites. Phosphorylation at Ser-78 mediated by PLK4 is essential for proper organization and integrity of centriolar satellites but is dispensable for its localization to centrioles and its function in ciliogenesis.

It localises to the cytoplasm. Its subcellular location is the cytoskeleton. It is found in the microtubule organizing center. The protein localises to the centrosome. The protein resides in the centriolar satellite. It localises to the centriole. Its subcellular location is the cilium basal body. It is found in the cytoplasmic vesicle. The protein localises to the secretory vesicle. The protein resides in the acrosome. In terms of biological role, component of centriolar satellites contributing to the building of a complex and dynamic network required to regulate cilia/flagellum formation. In proliferating cells, MIB1-mediated ubiquitination induces its sequestration within centriolar satellites, precluding untimely cilia formation initiation. In contrast, during normal and ultraviolet or heat shock cellular stress-induced ciliogenesis, its non-ubiquitinated form is rapidly displaced from centriolar satellites and recruited to centrosome/basal bodies in a microtubule- and p38 MAPK-dependent manner. Also acts as a negative regulator of BBSome ciliary trafficking. Plays a role in sperm flagellar formation; may be involved in the regulation of intraflagellar transport (IFT) and/or intramanchette (IMT) trafficking, which are important for axoneme extension and/or cargo delivery to the nascent sperm tail. Required for optimal cell proliferation and cell cycle progression; may play a role in the regulation of genome stability in non-ciliogenic cells. Involved in centriole duplication. Required for CEP152, WDR62 and CEP63 centrosomal localization and promotes the centrosomal localization of CDK2. Essential for maintaining proper centriolar satellite integrity. The sequence is that of Centrosomal protein of 131 kDa (CEP131) from Homo sapiens (Human).